Here is a 92-residue protein sequence, read N- to C-terminus: Small ribosomal subunit protein uS19c (92 aa).

This sequence belongs to the universal ribosomal protein uS19 family.

The protein localises to the plastid. It is found in the chloroplast. Its function is as follows. Protein S19 forms a complex with S13 that binds strongly to the 16S ribosomal RNA. This Nandina domestica (Heavenly bamboo) protein is Small ribosomal subunit protein uS19c.